The primary structure comprises 292 residues: Intermediate transcription factor 3 small subunit (292 aa).

The protein belongs to the orthopoxvirus OPG134 family. In terms of assembly, heterodimer of a 45 kDa (A23R) and a 32 kDa (A8R) subunit to form the virus intermediate transcription factor (VITF)-3.

In terms of biological role, acts with RNA polymerase to initiate transcription from intermediate gene promoters. In Monkeypox virus, this protein is Intermediate transcription factor 3 small subunit (OPG134).